A 185-amino-acid chain; its full sequence is Acireductone dioxygenase (185 aa).

A disordered region spans residues 1-23; it reads MSRLSIHPEGNTNATSPAEPLLE. 4 residues coordinate Fe(2+): histidine 102, histidine 104, glutamate 108, and histidine 146. Residues histidine 102, histidine 104, glutamate 108, and histidine 146 each coordinate Ni(2+).

This sequence belongs to the acireductone dioxygenase (ARD) family. Monomer. The cofactor is Fe(2+). It depends on Ni(2+) as a cofactor.

The enzyme catalyses 1,2-dihydroxy-5-(methylsulfanyl)pent-1-en-3-one + O2 = 3-(methylsulfanyl)propanoate + CO + formate + 2 H(+). It catalyses the reaction 1,2-dihydroxy-5-(methylsulfanyl)pent-1-en-3-one + O2 = 4-methylsulfanyl-2-oxobutanoate + formate + 2 H(+). It participates in amino-acid biosynthesis; L-methionine biosynthesis via salvage pathway; L-methionine from S-methyl-5-thio-alpha-D-ribose 1-phosphate: step 5/6. Its function is as follows. Catalyzes 2 different reactions between oxygen and the acireductone 1,2-dihydroxy-3-keto-5-methylthiopentene (DHK-MTPene) depending upon the metal bound in the active site. Fe-containing acireductone dioxygenase (Fe-ARD) produces formate and 2-keto-4-methylthiobutyrate (KMTB), the alpha-ketoacid precursor of methionine in the methionine recycle pathway. Ni-containing acireductone dioxygenase (Ni-ARD) produces methylthiopropionate, carbon monoxide and formate, and does not lie on the methionine recycle pathway. This Prochlorococcus marinus (strain MIT 9303) protein is Acireductone dioxygenase.